A 541-amino-acid polypeptide reads, in one-letter code: Chaperonin GroEL 2 (541 aa).

ATP contacts are provided by residues 29–32, 86–90, glycine 413, 477–479, and aspartate 493; these read TLGP, DGTTT, and NAA.

The protein belongs to the chaperonin (HSP60) family. As to quaternary structure, forms a cylinder of 14 subunits composed of two heptameric rings stacked back-to-back. Interacts with the co-chaperonin GroES.

Its subcellular location is the cytoplasm. It catalyses the reaction ATP + H2O + a folded polypeptide = ADP + phosphate + an unfolded polypeptide.. In terms of biological role, together with its co-chaperonin GroES, plays an essential role in assisting protein folding. The GroEL-GroES system forms a nano-cage that allows encapsulation of the non-native substrate proteins and provides a physical environment optimized to promote and accelerate protein folding. This is Chaperonin GroEL 2 from Nocardioides sp. (strain ATCC BAA-499 / JS614).